The sequence spans 303 residues: Cell division protein ZipA (303 aa).

At 1–6 (MMQDLR) the chain is on the periplasmic side. A helical transmembrane segment spans residues 7–27 (LILIIVGAIAIIALLLHGLWT). Topologically, residues 28–303 (SRKERSSLFR…RIRSTLGVQV (276 aa)) are cytoplasmic. Disordered regions lie at residues 39 to 61 (RPVKRHKHDRQNSFVDDSDDEAF), 66 to 85 (KPYAHKQVKSHQEYKAEPAI), and 124 to 159 (EQEPQLGLFEFEEQNESERNGSAIEEKSQEAAGEKE). Composition is skewed to basic and acidic residues over residues 75–85 (SHQEYKAEPAI) and 139–159 (ESERNGSAIEEKSQEAAGEKE).

The protein belongs to the ZipA family. Interacts with FtsZ via their C-terminal domains.

Its subcellular location is the cell inner membrane. Functionally, essential cell division protein that stabilizes the FtsZ protofilaments by cross-linking them and that serves as a cytoplasmic membrane anchor for the Z ring. Also required for the recruitment to the septal ring of downstream cell division proteins. This Photorhabdus laumondii subsp. laumondii (strain DSM 15139 / CIP 105565 / TT01) (Photorhabdus luminescens subsp. laumondii) protein is Cell division protein ZipA.